Consider the following 184-residue polypeptide: Isopentenyl-diphosphate Delta-isomerase (184 aa).

Histidine 26 and histidine 33 together coordinate Mn(2+). Residues 31–165 (PLHLAFSCYL…PSAFSPWLGL (135 aa)) enclose the Nudix hydrolase domain. Cysteine 68 is a catalytic residue. Histidine 70 lines the Mn(2+) pocket. A Mg(2+)-binding site is contributed by glutamate 88. Positions 115 and 117 each coordinate Mn(2+). Glutamate 117 is an active-site residue.

Belongs to the IPP isomerase type 1 family. Mg(2+) is required as a cofactor. Mn(2+) serves as cofactor.

The protein resides in the cytoplasm. The catalysed reaction is isopentenyl diphosphate = dimethylallyl diphosphate. It functions in the pathway isoprenoid biosynthesis; dimethylallyl diphosphate biosynthesis; dimethylallyl diphosphate from isopentenyl diphosphate: step 1/1. Its function is as follows. Catalyzes the 1,3-allylic rearrangement of the homoallylic substrate isopentenyl (IPP) to its highly electrophilic allylic isomer, dimethylallyl diphosphate (DMAPP). This Paenarthrobacter aurescens (strain TC1) protein is Isopentenyl-diphosphate Delta-isomerase.